A 182-amino-acid chain; its full sequence is Inosine/xanthosine triphosphatase (182 aa).

This sequence belongs to the YjjX NTPase family. Homodimer. Mg(2+) is required as a cofactor. It depends on Mn(2+) as a cofactor.

The catalysed reaction is XTP + H2O = XDP + phosphate + H(+). It carries out the reaction ITP + H2O = IDP + phosphate + H(+). In terms of biological role, phosphatase that hydrolyzes non-canonical purine nucleotides such as XTP and ITP to their respective diphosphate derivatives. Probably excludes non-canonical purines from DNA/RNA precursor pool, thus preventing their incorporation into DNA/RNA and avoiding chromosomal lesions. The polypeptide is Inosine/xanthosine triphosphatase (Vibrio parahaemolyticus serotype O3:K6 (strain RIMD 2210633)).